The sequence spans 329 residues: Malate dehydrogenase (329 aa).

Gly-12–Gly-18 contacts NAD(+). Residues Arg-93 and Arg-99 each coordinate substrate. Residues Asn-106, Gln-113, and Val-130–Asn-132 contribute to the NAD(+) site. 2 residues coordinate substrate: Asn-132 and Arg-163. The active-site Proton acceptor is His-188.

This sequence belongs to the LDH/MDH superfamily. MDH type 2 family.

The catalysed reaction is (S)-malate + NAD(+) = oxaloacetate + NADH + H(+). Strongly inhibited by Hg(2+) and Zn(2+). Activated by Na(+), NH(4)(+), Ca(2+), Cu(2+) and Mg(2+). In terms of biological role, catalyzes the reversible oxidation of malate to oxaloacetate. Exhibits remarkably higher catalytic efficiency for oxaloacetate reduction than for malate oxidation in vitro. Highly specific for NAD(H). Can also use NADPH for oxaloacetate reduction, but catalytic efficiency is 97-fold higher with NADH. No activity detected with NADP(+) and malate. The sequence is that of Malate dehydrogenase from Streptomyces avermitilis (strain ATCC 31267 / DSM 46492 / JCM 5070 / NBRC 14893 / NCIMB 12804 / NRRL 8165 / MA-4680).